The chain runs to 164 residues: 6,7-dimethyl-8-ribityllumazine synthase (164 aa).

5-amino-6-(D-ribitylamino)uracil contacts are provided by residues tyrosine 30, 61-63, and 85-87; these read ALE and CVI. 90 to 91 is a binding site for (2S)-2-hydroxy-3-oxobutyl phosphate; sequence ET. Histidine 93 serves as the catalytic Proton donor. Asparagine 118 serves as a coordination point for 5-amino-6-(D-ribitylamino)uracil. A (2S)-2-hydroxy-3-oxobutyl phosphate-binding site is contributed by arginine 132.

The protein belongs to the DMRL synthase family.

It catalyses the reaction (2S)-2-hydroxy-3-oxobutyl phosphate + 5-amino-6-(D-ribitylamino)uracil = 6,7-dimethyl-8-(1-D-ribityl)lumazine + phosphate + 2 H2O + H(+). The protein operates within cofactor biosynthesis; riboflavin biosynthesis; riboflavin from 2-hydroxy-3-oxobutyl phosphate and 5-amino-6-(D-ribitylamino)uracil: step 1/2. In terms of biological role, catalyzes the formation of 6,7-dimethyl-8-ribityllumazine by condensation of 5-amino-6-(D-ribitylamino)uracil with 3,4-dihydroxy-2-butanone 4-phosphate. This is the penultimate step in the biosynthesis of riboflavin. The sequence is that of 6,7-dimethyl-8-ribityllumazine synthase from Methylobacterium radiotolerans (strain ATCC 27329 / DSM 1819 / JCM 2831 / NBRC 15690 / NCIMB 10815 / 0-1).